We begin with the raw amino-acid sequence, 223 residues long: Charged multivesicular body protein 3 (223 aa).

Residue G2 is the site of N-myristoyl glycine attachment. The tract at residues 2–113 is intramolecular interaction with C-terminus; it reads GLFGKTQEKP…LQKSTEVMKA (112 aa). Residues 22–54 adopt a coiled-coil conformation; it reads KIRKEMRVVDRQIRDIQREEEKVKRSVKDAAKK. 2 important for autoinhibitory function regions span residues 59 to 64 and 168 to 169; these read VCVVLA and IL. The stretch at 149-223 forms a coiled coil; it reads ESMDDQEEME…MQSRLATLRS (75 aa). The tract at residues 151 to 221 is intramolecular interaction with N-terminus; the sequence is MDDQEEMEEA…EAMQSRLATL (71 aa). The interval 151–223 is interaction with VPS4A; the sequence is MDDQEEMEEA…MQSRLATLRS (73 aa). Residue K179 forms a Glycyl lysine isopeptide (Lys-Gly) (interchain with G-Cter in ubiquitin) linkage. The disordered stretch occupies residues 180–223; it reads APSKVTDALPEPEPAGAMAASEGDEEDDEEDLEAMQSRLATLRS. 3 interaction with STAMBP regions span residues 196–223, 204–208, and 222–223; these read AMAA…TLRS, EEDDE, and RS. Residue S200 is modified to Phosphoserine. The short motif at 201-212 is the MIT-interacting motif element; that stretch reads EGDEEDDEEDLE. The segment covering 201-212 has biased composition (acidic residues); that stretch reads EGDEEDDEEDLE.

This sequence belongs to the SNF7 family. As to quaternary structure, probable core component of the endosomal sorting required for transport complex III (ESCRT-III). ESCRT-III components are thought to multimerize to form a flat lattice on the perimeter membrane of the endosome. Several assembly forms of ESCRT-III may exist that interact and act sequentially. Forms a metastable monomer in solution; its core structure (without part of the putative autoinhibitory C-terminal acidic region) oligomerizes into a flat lattice via two different dimerization interfaces. In vitro, heteromerizes with CHMP2A (but not CHMP4) to form helical tubular structures that expose membrane-interacting sites on the outside whereas VPS4B can associate on the inside of the tubule. May interact with IGFBP7; the relevance of such interaction however remains unclear. Interacts with CHMP2A. Interacts with CHMP4A; the interaction requires the release of CHMP4A autoinhibition. Interacts with VPS4A. Interacts with STAMBP; the interaction appears to relieve the autoinhibition of CHMP3. Interacts with VTA1.

It is found in the cytoplasm. It localises to the cytosol. The protein resides in the membrane. Its subcellular location is the endosome. The protein localises to the late endosome membrane. Functionally, probable core component of the endosomal sorting required for transport complex III (ESCRT-III) which is involved in multivesicular bodies (MVBs) formation and sorting of endosomal cargo proteins into MVBs. MVBs contain intraluminal vesicles (ILVs) that are generated by invagination and scission from the limiting membrane of the endosome and mostly are delivered to lysosomes enabling degradation of membrane proteins, such as stimulated growth factor receptors, lysosomal enzymes and lipids. The MVB pathway appears to require the sequential function of ESCRT-O, -I,-II and -III complexes. ESCRT-III proteins mostly dissociate from the invaginating membrane before the ILV is released. The ESCRT machinery also functions in topologically equivalent membrane fission events, such as the terminal stages of cytokinesis. ESCRT-III proteins are believed to mediate the necessary vesicle extrusion and/or membrane fission activities, possibly in conjunction with the AAA ATPase VPS4. Selectively binds to phosphatidylinositol 3,5-bisphosphate PtdIns(3,5)P2 and PtdIns(3,4)P2 in preference to other phosphoinositides tested. Involved in late stages of cytokinesis. Plays a role in endosomal sorting/trafficking of EGF receptor. This chain is Charged multivesicular body protein 3 (Chmp3), found in Rattus norvegicus (Rat).